We begin with the raw amino-acid sequence, 327 residues long: Lipoyl synthase (327 aa).

[4Fe-4S] cluster-binding residues include Cys-75, Cys-80, Cys-86, Cys-101, Cys-105, Cys-108, and Ser-315. A Radical SAM core domain is found at 87-304 (FGNGTATFMI…EEEAYKMGFS (218 aa)).

This sequence belongs to the radical SAM superfamily. Lipoyl synthase family. Requires [4Fe-4S] cluster as cofactor.

Its subcellular location is the cytoplasm. The enzyme catalyses [[Fe-S] cluster scaffold protein carrying a second [4Fe-4S](2+) cluster] + N(6)-octanoyl-L-lysyl-[protein] + 2 oxidized [2Fe-2S]-[ferredoxin] + 2 S-adenosyl-L-methionine + 4 H(+) = [[Fe-S] cluster scaffold protein] + N(6)-[(R)-dihydrolipoyl]-L-lysyl-[protein] + 4 Fe(3+) + 2 hydrogen sulfide + 2 5'-deoxyadenosine + 2 L-methionine + 2 reduced [2Fe-2S]-[ferredoxin]. The protein operates within protein modification; protein lipoylation via endogenous pathway; protein N(6)-(lipoyl)lysine from octanoyl-[acyl-carrier-protein]: step 2/2. Catalyzes the radical-mediated insertion of two sulfur atoms into the C-6 and C-8 positions of the octanoyl moiety bound to the lipoyl domains of lipoate-dependent enzymes, thereby converting the octanoylated domains into lipoylated derivatives. In Variovorax paradoxus (strain S110), this protein is Lipoyl synthase.